The chain runs to 282 residues: DNA processing protein DprA (282 aa).

The protein belongs to the DprA/Smf family. As to quaternary structure, homodimer; forms tail-to-tail dimers, forms nucleoprotein complex (NPC) which requires at least 30 nucleotides (nt) of ssDNA becoming optimal with 50 nt. Interacts with RecA, forms mixed DprA-RecA-ssDNA filaments. Interacts with ComFA and ComFC.

The protein resides in the cytoplasm. Functionally, protein that helps load RecA onto ssDNA during transformation. Required for DNA transformation. Not required for DNA uptake but for a later stage of transformation. Thought to interact at the cell pole with newly imported transforming ssDNA which it binds cooperatively, protecting linear and circular ssDNA from nuclease action. Forms bridges between DNA segments. Favors the loading of RecA onto ssDNA and formation of RecA-DNA filaments, triggering RecA-catalysis of ATP-driven homologous DNA pairing. The polypeptide is DNA processing protein DprA (Streptococcus pneumoniae (strain ATCC BAA-255 / R6)).